Here is a 299-residue protein sequence, read N- to C-terminus: Bifunctional protein FolD (299 aa).

Residues 179 to 181 (GPG) and Ile-245 each bind NADP(+).

Belongs to the tetrahydrofolate dehydrogenase/cyclohydrolase family. Homodimer.

The enzyme catalyses (6R)-5,10-methylene-5,6,7,8-tetrahydrofolate + NADP(+) = (6R)-5,10-methenyltetrahydrofolate + NADPH. It carries out the reaction (6R)-5,10-methenyltetrahydrofolate + H2O = (6R)-10-formyltetrahydrofolate + H(+). It participates in one-carbon metabolism; tetrahydrofolate interconversion. Its function is as follows. Catalyzes the oxidation of 5,10-methylenetetrahydrofolate to 5,10-methenyltetrahydrofolate and then the hydrolysis of 5,10-methenyltetrahydrofolate to 10-formyltetrahydrofolate. The protein is Bifunctional protein FolD of Deinococcus radiodurans (strain ATCC 13939 / DSM 20539 / JCM 16871 / CCUG 27074 / LMG 4051 / NBRC 15346 / NCIMB 9279 / VKM B-1422 / R1).